The following is a 93-amino-acid chain: MGRSLKKGPYIDPSVEKKILAMNEKGEKKVFKTWARDCTIFPEMVGHTIAVHNGKTHVPVYITEEMVGHKLGEFAPTRTFRGHGGDERSSRVR.

It belongs to the universal ribosomal protein uS19 family.

Protein S19 forms a complex with S13 that binds strongly to the 16S ribosomal RNA. This chain is Small ribosomal subunit protein uS19, found in Symbiobacterium thermophilum (strain DSM 24528 / JCM 14929 / IAM 14863 / T).